Consider the following 418-residue polypeptide: Pyruvate decarboxylase 1 (418 aa).

Histidine 59 contributes to the substrate binding site. The tract at residues 337–418 (DSWFNCQKLK…IFLINNGGYT (82 aa)) is thiamine pyrophosphate binding. Aspartate 387, asparagine 414, and glycine 416 together coordinate Mg(2+).

This sequence belongs to the TPP enzyme family. As to quaternary structure, homotetramer. Requires a metal cation as cofactor. The cofactor is thiamine diphosphate. In terms of tissue distribution, leaves.

The catalysed reaction is a 2-oxocarboxylate + H(+) = an aldehyde + CO2. In Nicotiana tabacum (Common tobacco), this protein is Pyruvate decarboxylase 1 (PDC1).